A 446-amino-acid chain; its full sequence is Nuclear distribution protein nudF (446 aa).

Positions 9 to 41 (QAEELHKSMVAYLSSIKASQSSNTLREELGIGD) constitute a LisH domain. A coiled-coil region spans residues 60 to 86 (TGIARLQRKILDLESKITSLQAELDSV). WD repeat units lie at residues 113 to 154 (SHRD…RTLK), 156 to 196 (HMRG…ANIR), 200 to 240 (GHDH…CVRT), 243 to 282 (SNSI…PRAA), 285 to 345 (GHDN…IKTL), 347 to 386 (GHDN…RLVK), 391 to 430 (AHGH…PAFQ), and 432 to 446 (VIAT…RVFK).

It belongs to the WD repeat LIS1/nudF family. In terms of assembly, self-associates. Interacts with nudE and dynein.

The protein resides in the cytoplasm. The protein localises to the cytoskeleton. It localises to the spindle pole. Functionally, positively regulates the activity of the minus-end directed microtubule motor protein dynein. May enhance dynein-mediated microtubule sliding by targeting dynein to the microtubule plus end. Required for nuclear migration during vegetative growth as well as development. Required for retrograde early endosome (EE) transport from the hyphal tip. Required for localization of dynein to the mitotic spindle poles. Recruits additional proteins to the dynein complex at SPBs. This is Nuclear distribution protein nudF from Aspergillus terreus (strain NIH 2624 / FGSC A1156).